Consider the following 460-residue polypeptide: MGSKSPNGEDRGPNGPSAKKAVASINPPKSAAASGLLRGALEDQDEDGDDDEGKIGADMNVSEKTANGTKKRRRNNKKKKSAQAAQQTAPPRVEIATLFHNRPYPEGEIVEYGINDENLVRTTDEEFRHLAVANNMNDEFLRDYRKAAEVHRQVRQYAQTIAKPGISMTELAREIEDGVRALVGHQGIETGDSLKAGMGFPTGLCINNVAAHWTPNPGAREVVLQHDDVLSIDFGVHVNGRIVDSAFTVAFNPMYDKLLTAVKAATNTGLKESGIDARMDYISETIQEVMESYEVMINGKPLPVKALSSLSGHNILRYKIHGDKQVPFVKTRTSQRMEEGDVFAIETFGSTGIGRTRDDVGVYGYSRNENVSTAGVHLASAKSLLKAIDENFGTLPFSRNYLERIGVKNYHLGMRSLIASGVVECYAPLVDTPGSYVAQFEHTVLLRPNCKEIISRGDDY.

Residues methionine 1–proline 90 form a disordered region. A compositionally biased stretch (low complexity) spans serine 30–glycine 39. Positions glutamate 42–glutamate 52 are enriched in acidic residues. Positions threonine 69 to serine 81 are enriched in basic residues. Histidine 212 provides a ligand contact to substrate. A divalent metal cation is bound by residues aspartate 233, aspartate 244, and histidine 313. Residue histidine 321 coordinates substrate. A divalent metal cation contacts are provided by glutamate 346 and glutamate 441.

The protein belongs to the peptidase M24A family. Methionine aminopeptidase eukaryotic type 2 subfamily. Co(2+) serves as cofactor. The cofactor is Zn(2+). Mn(2+) is required as a cofactor. It depends on Fe(2+) as a cofactor.

It localises to the cytoplasm. It carries out the reaction Release of N-terminal amino acids, preferentially methionine, from peptides and arylamides.. Cotranslationally removes the N-terminal methionine from nascent proteins. The N-terminal methionine is often cleaved when the second residue in the primary sequence is small and uncharged (Met-Ala-, Cys, Gly, Pro, Ser, Thr, or Val). The protein is Methionine aminopeptidase 2-1 of Leptosphaeria maculans (strain JN3 / isolate v23.1.3 / race Av1-4-5-6-7-8) (Blackleg fungus).